Consider the following 474-residue polypeptide: Synaptotagmin-17 (474 aa).

Residues 60–112 (WLMASRSSDKDGDSVHTASEVPLTPRTNSPDGRRSSSDTSKSTYSLTRRISSL) form a disordered region. Residues 96–112 (SDTSKSTYSLTRRISSL) are compositionally biased toward low complexity. Serine 118 and serine 119 each carry phosphoserine. 2 C2 domains span residues 184–310 (QLGM…HWWK) and 321–455 (ELGE…EQWH).

It belongs to the synaptotagmin family.

The protein resides in the membrane. Plays a role in dendrite formation by melanocytes. This is Synaptotagmin-17 (SYT17) from Pongo abelii (Sumatran orangutan).